Reading from the N-terminus, the 274-residue chain is Tryptophan synthase alpha chain (274 aa).

Catalysis depends on proton acceptor residues glutamate 49 and aspartate 60.

Belongs to the TrpA family. In terms of assembly, tetramer of two alpha and two beta chains.

The catalysed reaction is (1S,2R)-1-C-(indol-3-yl)glycerol 3-phosphate + L-serine = D-glyceraldehyde 3-phosphate + L-tryptophan + H2O. Its pathway is amino-acid biosynthesis; L-tryptophan biosynthesis; L-tryptophan from chorismate: step 5/5. Functionally, the alpha subunit is responsible for the aldol cleavage of indoleglycerol phosphate to indole and glyceraldehyde 3-phosphate. This chain is Tryptophan synthase alpha chain, found in Alkalilimnicola ehrlichii (strain ATCC BAA-1101 / DSM 17681 / MLHE-1).